The sequence spans 145 residues: Bacilliredoxin SSP1241 (145 aa).

The protein belongs to the bacilliredoxin family.

The chain is Bacilliredoxin SSP1241 from Staphylococcus saprophyticus subsp. saprophyticus (strain ATCC 15305 / DSM 20229 / NCIMB 8711 / NCTC 7292 / S-41).